Consider the following 220-residue polypeptide: Small ribosomal subunit protein uS2 (220 aa).

Belongs to the universal ribosomal protein uS2 family.

In Methanococcus maripaludis (strain C5 / ATCC BAA-1333), this protein is Small ribosomal subunit protein uS2.